We begin with the raw amino-acid sequence, 468 residues long: ERO1-like protein alpha (468 aa).

Residues M1–G23 form the signal peptide. Intrachain disulfides connect C35/C48, C37/C46, C85/C391, C94/C99, C94/C131, C99/C104, C208/C241, and C394/C397. S106, S143, and S145 each carry phosphoserine. The FAD site is built by R187, T189, and W200. 2 residues coordinate FAD: S252 and H255. An N-linked (GlcNAc...) asparagine glycan is attached at N280. FAD-binding residues include R287 and R300. The N-linked (GlcNAc...) asparagine glycan is linked to N384.

The protein belongs to the EROs family. In terms of assembly, predominantly monomer. May function both as a monomer and a homodimer. Interacts with PDILT. Interacts with ERP44; the interaction results in retention of ERO1A in the endoplasmic reticulum. It depends on FAD as a cofactor. The Cys-94/Cys-99 and Cys-394/Cys-397 disulfide bonds constitute the redox-active center. The Cys-94/Cys-99 disulfide bond may accept electron from P4HB and funnel them to the active site disulfide Cys-394/Cys-397. The regulatory Cys-99/Cys-104 disulfide bond stabilizes the other regulatory bond Cys-94/Cys-131. In terms of processing, phosphorylated on Ser-145 by FAM20C in the Golgi which increases its enzymatic activity. Phosphorylation is induced by lactation. It is also induced by hypoxia and reductive stress.

Its subcellular location is the endoplasmic reticulum membrane. The protein resides in the golgi apparatus lumen. It localises to the secreted. It is found in the cell projection. The protein localises to the dendrite. Enzyme activity is tightly regulated to prevent the accumulation of reactive oxygen species in the endoplasmic reticulum. Reversibly down-regulated by the formation of disulfide bonds between the active site Cys-94 and Cys-131, and between Cys-99 and Cys-104. Glutathione may be required to regulate its activity in the endoplasmic reticulum. Functionally, oxidoreductase involved in disulfide bond formation in the endoplasmic reticulum. Efficiently reoxidizes P4HB/PDI, the enzyme catalyzing protein disulfide formation, in order to allow P4HB to sustain additional rounds of disulfide formation. Following P4HB reoxidation, passes its electrons to molecular oxygen via FAD, leading to the production of reactive oxygen species (ROS) in the cell. Required for the proper folding of immunoglobulins. Plays an important role in ER stress-induced, CHOP-dependent apoptosis by activating the inositol 1,4,5-trisphosphate receptor IP3R1. This chain is ERO1-like protein alpha, found in Bos taurus (Bovine).